We begin with the raw amino-acid sequence, 463 residues long: Putative glycine--tRNA ligase, cytoplasmic (463 aa).

The segment at 25–54 (TLEDSHAAKPETNAAIELPNKSKPEKSAVE) is disordered. Over residues 44 to 54 (NKSKPEKSAVE) the composition is skewed to basic and acidic residues. Substrate contacts are provided by Arg153 and Glu239. ATP is bound by residues 271-273 (RNE) and 281-286 (LRTREF). Substrate contacts are provided by residues 286–290 (FTLAE) and Asn376. 398–399 (EC) is a binding site for ATP.

The protein belongs to the class-II aminoacyl-tRNA synthetase family. Homodimer.

The protein resides in the cytoplasm. It catalyses the reaction tRNA(Gly) + glycine + ATP = glycyl-tRNA(Gly) + AMP + diphosphate. Its function is as follows. Catalyzes the attachment of glycine to tRNA(Gly). Is also able produce diadenosine tetraphosphate (Ap4A), a universal pleiotropic signaling molecule needed for cell regulation pathways, by direct condensation of 2 ATPs. This chain is Putative glycine--tRNA ligase, cytoplasmic, found in Arabidopsis thaliana (Mouse-ear cress).